The primary structure comprises 651 residues: Endo-1,4-beta-xylanase A (651 aa).

A signal peptide spans 1-30 (MKRKVKKMAAMATSIIMAIMIILHSIPVLA). The GH11 domain maps to 33–227 (IIYDNETGTH…SSGYANVYKN (195 aa)). E124 acts as the Nucleophile in catalysis. E214 (proton donor) is an active-site residue. 3 CBM6 domains span residues 250–370 (SIIE…FIFS), 387–507 (SIIQ…FVFT), and 527–647 (SNIQ…FVFS). Residues E253 and E255 each contribute to the Ca(2+) site. Position 270 (T270) interacts with D-xylotriose. R275 contributes to the Ca(2+) binding site. Repeat 1 spans residues 278 to 339 (GYIENGNTVT…SSTGSWNTYQ (62 aa)). The segment at 278 to 616 (GYIENGNTVT…GSTGSFDTYR (339 aa)) is 3 X 61 AA approximate repeats. Residues Y279, N336, and N363 each coordinate D-xylotriose. 3 residues coordinate D-xylobiose: Y279, N336, and N363. D365 contributes to the Ca(2+) binding site. Residues 415–476 (GYIENGYSTT…PSTNSWDSYQ (62 aa)) form repeat 2. Positions 530, 532, and 552 each coordinate Ca(2+). Residues 555–616 (GYIENGYSTT…GSTGSFDTYR (62 aa)) form repeat 3. Residues Y556, D613, and N640 each coordinate D-xylotriose. D642 contributes to the Ca(2+) binding site.

This sequence belongs to the glycosyl hydrolase 11 (cellulase G) family.

The protein localises to the secreted. It catalyses the reaction Endohydrolysis of (1-&gt;4)-beta-D-xylosidic linkages in xylans.. Its pathway is glycan degradation; xylan degradation. Its function is as follows. Endoxylanase that degrades arabinoxylan and glucuronoxylan to xylobiose and xylotriose (in vitro). In Thermoclostridium stercorarium (Clostridium stercorarium), this protein is Endo-1,4-beta-xylanase A (xynA).